The primary structure comprises 128 residues: Large ribosomal subunit protein bL19 (128 aa).

It belongs to the bacterial ribosomal protein bL19 family.

In terms of biological role, this protein is located at the 30S-50S ribosomal subunit interface and may play a role in the structure and function of the aminoacyl-tRNA binding site. This Aromatoleum aromaticum (strain DSM 19018 / LMG 30748 / EbN1) (Azoarcus sp. (strain EbN1)) protein is Large ribosomal subunit protein bL19.